The primary structure comprises 31 residues: Cytochrome b6-f complex subunit 6 (31 aa).

Residues 4–24 (ITSYFGFLLAALTITSALLIG) traverse the membrane as a helical segment.

Belongs to the PetL family. In terms of assembly, the 4 large subunits of the cytochrome b6-f complex are cytochrome b6, subunit IV (17 kDa polypeptide, PetD), cytochrome f and the Rieske protein, while the 4 small subunits are PetG, PetL, PetM and PetN. The complex functions as a dimer.

The protein localises to the plastid. The protein resides in the chloroplast thylakoid membrane. Functionally, component of the cytochrome b6-f complex, which mediates electron transfer between photosystem II (PSII) and photosystem I (PSI), cyclic electron flow around PSI, and state transitions. PetL is important for photoautotrophic growth as well as for electron transfer efficiency and stability of the cytochrome b6-f complex. This chain is Cytochrome b6-f complex subunit 6, found in Magnolia grandiflora (Southern magnolia).